Consider the following 206-residue polypeptide: Probable N-acetyltransferase 14 (206 aa).

Residues 55–206 (LRFVLASFAL…TLVREFSKEL (152 aa)) form the N-acetyltransferase domain. Residues 57 to 77 (FVLASFALALLLPVFLAVAAM) traverse the membrane as a helical segment.

It belongs to the camello family.

Its subcellular location is the membrane. Functionally, probable acetyltransferase. May act as a transcription factor regulating the expression of coproporphyrinogen oxidase by binding to a promoter regulatory element. This is Probable N-acetyltransferase 14 from Bos taurus (Bovine).